A 548-amino-acid chain; its full sequence is Probable sucrose-6-phosphate hydrolase (548 aa).

Residues 105–108 (LLND), Gln124, 167–168 (FS), 228–229 (RD), and Glu283 contribute to the substrate site. Residue Asp108 is part of the active site.

This sequence belongs to the glycosyl hydrolase 32 family.

It is found in the cytoplasm. It catalyses the reaction Hydrolysis of terminal non-reducing beta-D-fructofuranoside residues in beta-D-fructofuranosides.. Its pathway is glycan biosynthesis; sucrose metabolism. Enables the bacterium to metabolize sucrose as a sole carbon source. The polypeptide is Probable sucrose-6-phosphate hydrolase (Vibrio cholerae serotype O1 (strain ATCC 39315 / El Tor Inaba N16961)).